The sequence spans 211 residues: tRNA (guanine-N(7)-)-methyltransferase (211 aa).

Residues Glu-44, Asp-69, Asp-96, and Asp-118 each coordinate S-adenosyl-L-methionine. Asp-118 is a catalytic residue. Residue Lys-122 coordinates substrate. Residues 124 to 129 are interaction with RNA; that stretch reads KHEKRR. Substrate is bound by residues Asp-154 and 191-194; that span reads TEYE.

This sequence belongs to the class I-like SAM-binding methyltransferase superfamily. TrmB family.

The catalysed reaction is guanosine(46) in tRNA + S-adenosyl-L-methionine = N(7)-methylguanosine(46) in tRNA + S-adenosyl-L-homocysteine. It functions in the pathway tRNA modification; N(7)-methylguanine-tRNA biosynthesis. In terms of biological role, catalyzes the formation of N(7)-methylguanine at position 46 (m7G46) in tRNA. This chain is tRNA (guanine-N(7)-)-methyltransferase, found in Streptococcus pyogenes serotype M6 (strain ATCC BAA-946 / MGAS10394).